The chain runs to 148 residues: uncharacterized protein (148 aa).

Residues 1 to 11 are compositionally biased toward polar residues; the sequence is MKPRNINNSLP. A disordered region spans residues 1-31; it reads MKPRNINNSLPLQPLVPDQENKNKKNEEKSV. Residues 19-30 show a composition bias toward basic and acidic residues; sequence QENKNKKNEEKS.

This is an uncharacterized protein from Escherichia coli (strain K12).